We begin with the raw amino-acid sequence, 110 residues long: Acylphosphatase (110 aa).

One can recognise an Acylphosphatase-like domain in the interval 24–110 (RVRVYVSGRV…SGGARGFEVR (87 aa)). Catalysis depends on residues Arg-39 and Asn-57.

This sequence belongs to the acylphosphatase family.

It catalyses the reaction an acyl phosphate + H2O = a carboxylate + phosphate + H(+). In Rubrobacter xylanophilus (strain DSM 9941 / JCM 11954 / NBRC 16129 / PRD-1), this protein is Acylphosphatase (acyP).